We begin with the raw amino-acid sequence, 307 residues long: Shikimate kinase 2, chloroplastic (307 aa).

The transit peptide at 1–60 (MEARAGLAMQSRAAVGVGAGPGVGRRGRAVIRVGKRPTAASLRVGGPAGPAAAKPLAPLY) directs the protein to the chloroplast. Residue 101–108 (GMMGSGKS) participates in ATP binding. Position 108 (S108) interacts with Mg(2+). Substrate contacts are provided by D126, R151, and G173. ATP is bound at residue R212. Residues 285–307 (HSTSSGPVGDLIVDSQNRRTKAL) are disordered.

This sequence belongs to the shikimate kinase family. Mg(2+) serves as cofactor. As to expression, expressed in panicles.

It is found in the plastid. The protein resides in the chloroplast. It catalyses the reaction shikimate + ATP = 3-phosphoshikimate + ADP + H(+). It functions in the pathway metabolic intermediate biosynthesis; chorismate biosynthesis; chorismate from D-erythrose 4-phosphate and phosphoenolpyruvate: step 5/7. Catalyzes the specific phosphorylation of the 3-hydroxyl group of shikimic acid using ATP as a cosubstrate. The sequence is that of Shikimate kinase 2, chloroplastic (SK2) from Oryza sativa subsp. japonica (Rice).